Here is a 272-residue protein sequence, read N- to C-terminus: METYAVFGNPIAHSKSPFIHQQFAQQLNIEHPYGRVLAPINDFINTLNAFFRAGGKGANVTVPFKEEAFARADELTERAALSGAVNTLKRLEDGRLLGDNTDGVGLLSDLERLSFIRPGLRILLIGAGGASRGVLLPLLSLDCAVTITNRTVSRAEELAKLFAHTGSIQALGMDELEGHEFDLIINATSSGISGDIPAIPSSLIHPGIYCYDMFYQKGKTPFLAWCEQRGSKRNADGLGMLVAQAAHAFLLWHGVLPDVEPVIKQLQEELSA.

Shikimate is bound by residues 14–16 and Thr61; that span reads SKS. Catalysis depends on Lys65, which acts as the Proton acceptor. Glu77 contributes to the NADP(+) binding site. Shikimate is bound by residues Asn86 and Asp102. Residues 126 to 130, 149 to 154, and Met213 contribute to the NADP(+) site; these read GAGGA and NRTVSR. Residue Tyr215 participates in shikimate binding. Gly237 contacts NADP(+).

This sequence belongs to the shikimate dehydrogenase family. In terms of assembly, homodimer.

It carries out the reaction shikimate + NADP(+) = 3-dehydroshikimate + NADPH + H(+). The protein operates within metabolic intermediate biosynthesis; chorismate biosynthesis; chorismate from D-erythrose 4-phosphate and phosphoenolpyruvate: step 4/7. In terms of biological role, involved in the biosynthesis of the chorismate, which leads to the biosynthesis of aromatic amino acids. Catalyzes the reversible NADPH linked reduction of 3-dehydroshikimate (DHSA) to yield shikimate (SA). This is Shikimate dehydrogenase (NADP(+)) from Shigella flexneri serotype 5b (strain 8401).